Here is an 84-residue protein sequence, read N- to C-terminus: Small ribosomal subunit protein uS17 (84 aa).

The protein belongs to the universal ribosomal protein uS17 family. In terms of assembly, part of the 30S ribosomal subunit.

One of the primary rRNA binding proteins, it binds specifically to the 5'-end of 16S ribosomal RNA. The protein is Small ribosomal subunit protein uS17 of Shigella boydii serotype 18 (strain CDC 3083-94 / BS512).